Consider the following 228-residue polypeptide: MSVYSLPPAPPSDEHQLFQRAQALSGFTLGELATRAQWVIPADLKRVKGWVGMLLEFYLGASAGSKPEQDFADIGIELKTIPISAQGKPLETTFVCVAPLTGNSGVTWENSHVRHKLARVLWVPVEGERHIPLAERRVGAPLLWSPNVEEEELLRRDWEELMDLIVLGKVESITARHGQVLQLRPKAANSRALTEAIGEFGQPIMTLPRGFYLKKTLTAPMLARHFLL.

It belongs to the MutH family.

It is found in the cytoplasm. Functionally, sequence-specific endonuclease that cleaves unmethylated GATC sequences. It is involved in DNA mismatch repair. The polypeptide is DNA mismatch repair protein MutH (Yersinia pseudotuberculosis serotype IB (strain PB1/+)).